A 99-amino-acid chain; its full sequence is Large ribosomal subunit protein uL23 (99 aa).

Belongs to the universal ribosomal protein uL23 family. As to quaternary structure, part of the 50S ribosomal subunit. Contacts protein L29, and trigger factor when it is bound to the ribosome.

Functionally, one of the early assembly proteins it binds 23S rRNA. One of the proteins that surrounds the polypeptide exit tunnel on the outside of the ribosome. Forms the main docking site for trigger factor binding to the ribosome. The polypeptide is Large ribosomal subunit protein uL23 (Agathobacter rectalis (strain ATCC 33656 / DSM 3377 / JCM 17463 / KCTC 5835 / VPI 0990) (Eubacterium rectale)).